We begin with the raw amino-acid sequence, 527 residues long: Laccase-5 (527 aa).

A signal peptide spans 1 to 23 (MGKFHSFVNVVALSLSLSGRVFG). Positions 25 to 150 (IGPVTDLTIS…DGLRGPLVVY (126 aa)) constitute a Plastocyanin-like 1 domain. N-linked (GlcNAc...) asparagine glycosylation is found at asparagine 74 and asparagine 77. Cu cation contacts are provided by histidine 87, histidine 89, histidine 132, and histidine 134. 2 disulfides stabilise this stretch: cysteine 108/cysteine 516 and cysteine 140/cysteine 230. Residues asparagine 156, asparagine 209, asparagine 233, asparagine 242, asparagine 276, asparagine 317, asparagine 358, asparagine 366, asparagine 393, and asparagine 402 are each glycosylated (N-linked (GlcNAc...) asparagine). The 145-residue stretch at 162-306 (VDDDTTVITL…GGVNSAILRY (145 aa)) folds into the Plastocyanin-like 2 domain. A Plastocyanin-like 3 domain is found at 373 to 498 (TVPVLLQILS…AGFAIVFAED (126 aa)). Residues histidine 425, histidine 428, histidine 430, histidine 480, cysteine 481, histidine 482, and histidine 486 each contribute to the Cu cation site.

This sequence belongs to the multicopper oxidase family. It depends on Cu cation as a cofactor.

It localises to the secreted. It carries out the reaction 4 hydroquinone + O2 = 4 benzosemiquinone + 2 H2O. Functionally, lignin degradation and detoxification of lignin-derived products. This Trametes versicolor (White-rot fungus) protein is Laccase-5 (LCC5).